A 178-amino-acid chain; its full sequence is Single-stranded DNA-binding protein 2 (178 aa).

The SSB domain occupies 6 to 111 (VNKVILVGNL…VVVSQSGTMQ (106 aa)). A DNA-binding region spans residues 55–61 (WHRVVLY). Positions 111–161 (QMLGGRNSAGSGQQQGGWGQPQQPAAPSHSGMPPQQHPANEPPMDFDDDIP) are disordered.

As to quaternary structure, homotetramer.

The polypeptide is Single-stranded DNA-binding protein 2 (ssb2) (Salmonella typhi).